A 212-amino-acid polypeptide reads, in one-letter code: TATA-box-binding protein 2 (212 aa).

Repeat copies occupy residues threonine 30–glycine 114 and serine 120–leucine 201.

It belongs to the TBP family. In terms of assembly, belongs to the TFIID complex together with the TBP-associated factors (TAFs). Binds DNA as monomer.

It is found in the nucleus. General transcription factor that functions at the core of the DNA-binding multiprotein factor TFIID. Binding of TFIID to the TATA box is the initial transcriptional step of the pre-initiation complex (PIC), playing a role in the activation of eukaryotic genes transcribed by RNA polymerase II. The sequence is that of TATA-box-binding protein 2 from Entamoeba histolytica (strain ATCC 30459 / HM-1:IMSS / ABRM).